Reading from the N-terminus, the 505-residue chain is Maturase K (505 aa).

This sequence belongs to the intron maturase 2 family. MatK subfamily.

Its subcellular location is the plastid. The protein resides in the chloroplast. In terms of biological role, usually encoded in the trnK tRNA gene intron. Probably assists in splicing its own and other chloroplast group II introns. The sequence is that of Maturase K from Gomphrena haageana (Haage's globe-amaranth).